A 336-amino-acid polypeptide reads, in one-letter code: Potassium channel subfamily K member 1 (336 aa).

Over 1–20 the chain is Cytoplasmic; sequence MLQSLAGSSCVRLVERHRSA. Residues 21–41 traverse the membrane as a helical segment; sequence RCFGFLVLGYLLYLVFGAVVF. Topologically, residues 42–103 are extracellular; the sequence is SSVELPYEDL…SNASGNWNWD (62 aa). The N-linked (GlcNAc...) asparagine glycan is linked to N95. An intramembrane region (helical) is located at residues 104-116; the sequence is FTSALFFASTVLS. Residues 117–122 lie within the membrane without spanning it; sequence TTGYGH. The selectivity filter 1 stretch occupies residues 117-122; sequence TTGYGH. At 123-132 the chain is on the extracellular side; the sequence is TVPLSDGGKA. Residues 133 to 156 traverse the membrane as a helical segment; the sequence is FCIIYSVIGIPFTLLFLTAVVQRI. At 157-181 the chain is on the cytoplasmic side; it reads TVHVTRRPVLYFHIRWGFSKQVVAI. A helical membrane pass occupies residues 182 to 202; that stretch reads VHAVLLGFVTVSCFFFIPAAV. Residues 203 to 211 lie on the Extracellular side of the membrane; sequence FSVLEDDWN. An intramembrane region (helical) is located at residues 212-224; it reads FLESFYFCFISLS. The segment at 225 to 230 is selectivity filter 2; that stretch reads TIGLGD. The stretch at 225-231 is an intramembrane region; it reads TIGLGDY. Residues 232 to 243 lie on the Extracellular side of the membrane; the sequence is VPGEGYNQKFRE. A helical transmembrane segment spans residues 244-267; the sequence is LYKIGITCYLLLGLIAMLVVLETF. At 268 to 336 the chain is on the cytoplasmic side; sequence CELHELKKFR…SACMDGPANH (69 aa). K274 participates in a covalent cross-link: Glycyl lysine isopeptide (Lys-Gly) (interchain with G-Cter in SUMO). Positions 293–299 are important for intracellular retention in recycling endosomes; the sequence is IIEHDQL. The segment at 315–336 is disordered; it reads QKQNEPFVATQSSACMDGPANH. A Phosphoserine modification is found at S326.

It belongs to the two pore domain potassium channel (TC 1.A.1.8) family. Homodimer; disulfide-linked. Heterodimer with KCNK2; disulfide-linked. In astrocytes, forms mostly heterodimeric potassium channels with KCNK2, with only a minor proportion of functional channels containing homodimeric KCNK1. Interacts with KCNK3 and KCNK9, forming functional heterodimeric channels. Interacts with GNG4. Identified in a complex with PSD and ARF6; interacts only with PSD that is bound to ARF6. Interacts with UBE2I. Sumoylation is controversial. Sumoylated by UBE2I. Not sumoylated when expressed in xenopus oocytes or mammalian cells. Sumoylation inactivates the channel, but does not interfere with expression at the cell membrane. Sumoylation of a single subunit is sufficient to silence the dimeric channel. Sumoylation of KCNK1 is sufficient to silence heterodimeric channels formed by KCNK1 and KCNK3 or KCNK9. Desumoylated by SENP1; this activates the channel. Desumoylated by SENP1; this strongly increases halothane-mediated activation of heterodimeric channels formed with KCNK9. SENP1 treatment has no effect.

It localises to the cell membrane. Its subcellular location is the recycling endosome. The protein resides in the synaptic cell membrane. It is found in the cytoplasmic vesicle. The protein localises to the perikaryon. It localises to the cell projection. Its subcellular location is the dendrite. The protein resides in the apical cell membrane. The enzyme catalyses K(+)(in) = K(+)(out). It carries out the reaction NH4(+)(in) = NH4(+)(out). It catalyses the reaction Na(+)(in) = Na(+)(out). The catalysed reaction is Rb(+)(in) = Rb(+)(out). The enzyme catalyses Cs(+)(in) = Cs(+)(out). It carries out the reaction Li(+)(in) = Li(+)(out). It catalyses the reaction L-glutamate(out) = L-glutamate(in). The catalysed reaction is chloride(in) = chloride(out). Its function is as follows. Ion channel that contributes to passive transmembrane potassium transport and to the regulation of the resting membrane potential in brain astrocytes, but also in kidney and in other tissues. Forms dimeric channels through which potassium ions pass in accordance with their electrochemical gradient. The channel is selective for K(+) ions at physiological potassium concentrations and at neutral pH, but becomes permeable to Na(+) at subphysiological K(+) levels, and upon acidification of the extracellular medium. The homodimer has very low potassium channel activity, when expressed in heterologous systems, and can function as weakly inward rectifying potassium channel. Channel activity is modulated by activation of serotonin receptors. Heterodimeric channels containing KCNK1 and KCNK2 have much higher activity, and may represent the predominant form in astrocytes. Heterodimeric channels containing KCNK1 and KCNK3 or KCNK9 have much higher activity. Heterodimeric channels formed by KCNK1 and KCNK9 may contribute to halothane-sensitive currents. Mediates outward rectifying potassium currents in dentate gyrus granule cells and contributes to the regulation of their resting membrane potential. Contributes to the regulation of action potential firing in dentate gyrus granule cells and down-regulates their intrinsic excitability. In astrocytes, the heterodimer formed by KCNK1 and KCNK2 is required for rapid glutamate release in response to activation of G-protein coupled receptors, such as F2R and CNR1. Required for normal ion and water transport in the kidney. Contributes to the regulation of the resting membrane potential of pancreatic beta cells. The low channel activity of homodimeric KCNK1 may be due to sumoylation. The low channel activity may be due to rapid internalization from the cell membrane and retention in recycling endosomes. Permeable to monovalent cations with ion selectivity for K(+) &gt; Rb(+) &gt;&gt; NH4(+) &gt;&gt; Cs(+) = Na(+) = Li(+). In Pongo abelii (Sumatran orangutan), this protein is Potassium channel subfamily K member 1.